A 480-amino-acid polypeptide reads, in one-letter code: Adenosylhomocysteinase (480 aa).

3 residues coordinate substrate: Thr-63, Asp-142, and Glu-203. 204–206 (TTT) provides a ligand contact to NAD(+). Substrate contacts are provided by Lys-233 and Asp-237. Residues Asn-238, 267–272 (GYGDVG), Glu-290, Asn-325, 346–348 (IGH), and Asn-394 each bind NAD(+).

Belongs to the adenosylhomocysteinase family. Requires NAD(+) as cofactor.

Its subcellular location is the cytoplasm. It catalyses the reaction S-adenosyl-L-homocysteine + H2O = L-homocysteine + adenosine. The protein operates within amino-acid biosynthesis; L-homocysteine biosynthesis; L-homocysteine from S-adenosyl-L-homocysteine: step 1/1. May play a key role in the regulation of the intracellular concentration of adenosylhomocysteine. In Xylella fastidiosa (strain 9a5c), this protein is Adenosylhomocysteinase.